The chain runs to 104 residues: L-rhamnose mutarotase (104 aa).

Y18 is a binding site for substrate. H22 serves as the catalytic Proton donor. Substrate-binding positions include Y41 and 76-77 (WW).

It belongs to the rhamnose mutarotase family. As to quaternary structure, homodimer.

The protein localises to the cytoplasm. The catalysed reaction is alpha-L-rhamnose = beta-L-rhamnose. Its pathway is carbohydrate metabolism; L-rhamnose metabolism. Its function is as follows. L-rhamnose mutarotase involved in ulvan degradation. Ulvan is the main polysaccharide component of the Ulvales (green seaweed) cell wall. It is composed of disaccharide building blocks comprising 3-sulfated rhamnose (Rha3S) linked to D-glucuronic acid (GlcA), L-iduronic acid (IduA), or D-xylose (Xyl). L-rhamnose mutarotase catalyzes the anomeric conversion of alpha- to beta-L-rhamnose. The chain is L-rhamnose mutarotase (rhaM) from Formosa agariphila (strain DSM 15362 / KCTC 12365 / LMG 23005 / KMM 3901 / M-2Alg 35-1).